Here is a 123-residue protein sequence, read N- to C-terminus: Small ribosomal subunit protein uS12 (123 aa).

Asp89 is subject to 3-methylthioaspartic acid.

It belongs to the universal ribosomal protein uS12 family. In terms of assembly, part of the 30S ribosomal subunit. Contacts proteins S8 and S17. May interact with IF1 in the 30S initiation complex.

In terms of biological role, with S4 and S5 plays an important role in translational accuracy. Its function is as follows. Interacts with and stabilizes bases of the 16S rRNA that are involved in tRNA selection in the A site and with the mRNA backbone. Located at the interface of the 30S and 50S subunits, it traverses the body of the 30S subunit contacting proteins on the other side and probably holding the rRNA structure together. The combined cluster of proteins S8, S12 and S17 appears to hold together the shoulder and platform of the 30S subunit. The protein is Small ribosomal subunit protein uS12 of Anaeromyxobacter dehalogenans (strain 2CP-1 / ATCC BAA-258).